The chain runs to 338 residues: Popeye domain-containing protein 1 (338 aa).

Topologically, residues 1–40 are extracellular; it reads MATESILITTLPMDLNSQINNVTFGLNENETLCENWREIH. Asparagine 21 and asparagine 29 each carry an N-linked (GlcNAc...) asparagine glycan. A helical membrane pass occupies residues 41 to 61; that stretch reads HLVFHLANTCFAAGLVIPSTL. The Cytoplasmic segment spans residues 62–65; that stretch reads NLHM. A helical membrane pass occupies residues 66–86; that stretch reads ILLRGMLCLGCIFFIIWAILF. Over 87–91 the chain is Extracellular; that stretch reads RCALD. The helical transmembrane segment at 92–112 threads the bilayer; it reads IMIWNATFLSMNFMHFIYLVY. Topologically, residues 113-338 are cytoplasmic; it reads KKRPIKIEKD…VGPLSHAVFC (226 aa).

This sequence belongs to the popeye family.

The protein resides in the lateral cell membrane. The protein localises to the cell junction. Its subcellular location is the tight junction. It localises to the membrane. It is found in the cell membrane. The protein resides in the sarcolemma. The protein localises to the caveola. Cell adhesion molecule involved in the establishment and/or maintenance of cell integrity. May play a role in vamp3-mediated vesicular transport and recycling of different receptor molecules. May be involved in the formation and regulation of the tight junction (TJ) paracellular permeability barrier in epithelial cells. May induce primordial adhesive contact and aggregation of epithelial cells in a Ca(2+)-independent manner. May be involved in epithelial movement during corneal sheet formation and regeneration. May play a role in the regulation of cell shape and movement by modulating the Rho-GTPase activity. May be involved in skeletal muscle and heart development as well as in the maintenance of heart function. May also be involved in striated muscle regeneration and in the regulation of cell spreading. This Xenopus tropicalis (Western clawed frog) protein is Popeye domain-containing protein 1 (popdc1).